A 481-amino-acid polypeptide reads, in one-letter code: Aspartyl/glutamyl-tRNA(Asn/Gln) amidotransferase subunit B (481 aa).

The protein belongs to the GatB/GatE family. GatB subfamily. In terms of assembly, heterotrimer of A, B and C subunits.

The catalysed reaction is L-glutamyl-tRNA(Gln) + L-glutamine + ATP + H2O = L-glutaminyl-tRNA(Gln) + L-glutamate + ADP + phosphate + H(+). The enzyme catalyses L-aspartyl-tRNA(Asn) + L-glutamine + ATP + H2O = L-asparaginyl-tRNA(Asn) + L-glutamate + ADP + phosphate + 2 H(+). Allows the formation of correctly charged Asn-tRNA(Asn) or Gln-tRNA(Gln) through the transamidation of misacylated Asp-tRNA(Asn) or Glu-tRNA(Gln) in organisms which lack either or both of asparaginyl-tRNA or glutaminyl-tRNA synthetases. The reaction takes place in the presence of glutamine and ATP through an activated phospho-Asp-tRNA(Asn) or phospho-Glu-tRNA(Gln). The protein is Aspartyl/glutamyl-tRNA(Asn/Gln) amidotransferase subunit B of Pseudomonas syringae pv. syringae (strain B728a).